The chain runs to 256 residues: Fumarate reductase iron-sulfur subunit (256 aa).

The 2Fe-2S ferredoxin-type domain maps to 7–97; sequence MNVEVLRYNP…HMRIEPLANF (91 aa). Residue tyrosine 14 participates in a menaquinone binding. Cysteine 58, cysteine 63, cysteine 66, and cysteine 78 together coordinate [2Fe-2S] cluster. In terms of domain architecture, 4Fe-4S ferredoxin-type spans 151 to 180; that stretch reads LEKYRQFSMCINCGLCYAACPQFGLNPEFL. [4Fe-4S] cluster is bound by residues cysteine 160, cysteine 163, and cysteine 166. Residues cysteine 170, cysteine 216, and cysteine 222 each contribute to the [3Fe-4S] cluster site. Cysteine 226 contributes to the [4Fe-4S] cluster binding site. Residue 237 to 240 coordinates a menaquinone; it reads NQGK.

This sequence belongs to the succinate dehydrogenase/fumarate reductase iron-sulfur protein family. As to quaternary structure, fumarate dehydrogenase forms part of an enzyme complex containing four subunits: a flavoprotein, an iron-sulfur, and two hydrophobic anchor proteins. Requires [2Fe-2S] cluster as cofactor. The cofactor is [3Fe-4S] cluster. [4Fe-4S] cluster is required as a cofactor.

Its subcellular location is the cell inner membrane. It catalyses the reaction a quinone + succinate = fumarate + a quinol. It carries out the reaction a menaquinone + succinate = a menaquinol + fumarate. This is Fumarate reductase iron-sulfur subunit (frdB) from Haemophilus influenzae (strain ATCC 51907 / DSM 11121 / KW20 / Rd).